Here is a 585-residue protein sequence, read N- to C-terminus: Amyloid protein-binding protein 2 (585 aa).

8 TPR repeats span residues 50-83, 120-153, 206-239, 288-321, 333-367, 429-462, 471-505, and 514-547; these read QGRLCQLGSEFCELEVFAKVLRALDKRHLLHHCF, IQVGFVLGGFLSDAGWYSDAEKVFLSCLQLCTLH, AALYGELCALLFAKSHYDEAYKWCVEAMKEITAG, SDTLLDYGFYLLNVDNICQSVAIYQAALDIRQSV, HEDLAYSSYVHQYSSGKFDNALFHAERAIGIITHI, AKHYGNLGRLYQSMRKFKEAEEMHIKAIQIKEQL, ALSVGHLASLYNYDMNQYENAEKLYLRSIAIGKKL, and EYDYRGLIKLYNSIGNYEKVFEYHNVLSNWNRLR.

As to quaternary structure, component of a CRL2 E3 ubiquitin-protein ligase complex, also named ECS (Elongin BC-CUL2/5-SOCS-box protein) complex, composed of CUL2, Elongin BC (ELOB and ELOC), RBX1 and substrate-specific adapter APPBP2. Interacts with APP; APP interaction inhibits the E3 ubiquitin-protein ligase activity of the CRL2(APPBP2) complex. Rapidly degraded by the proteasome upon overexpression of a C-terminal fragment of APP.

The protein resides in the nucleus. Its subcellular location is the cytoplasm. The protein localises to the cytoskeleton. It localises to the membrane. It functions in the pathway protein modification; protein ubiquitination. Its activity is regulated as follows. E3 ubiquitin-protein ligase activity of the CRL2(APPBP2) complex is inhibited by APP. In terms of biological role, substrate-recognition component of a Cul2-RING (CRL2) E3 ubiquitin-protein ligase complex of the DesCEND (destruction via C-end degrons) pathway, which recognizes a C-degron located at the extreme C terminus of target proteins, leading to their ubiquitination and degradation. The C-degron recognized by the DesCEND pathway is usually a motif of less than ten residues and can be present in full-length proteins, truncated proteins or proteolytically cleaved forms. The CRL2(APPBP2) complex specifically recognizes proteins with a -Arg-Xaa-Xaa-Gly degron at the C-terminus, leading to their ubiquitination and degradation. The CRL2(APPBP2) complex mediates ubiquitination and degradation of truncated SELENOV selenoproteins produced by failed UGA/Sec decoding, which end with a -Arg-Xaa-Xaa-Gly degron. May play a role in intracellular protein transport: may be involved in the translocation of APP along microtubules toward the cell surface. The chain is Amyloid protein-binding protein 2 from Mus musculus (Mouse).